Reading from the N-terminus, the 135-residue chain is Galectin-1 (135 aa).

Ala2 carries the N-acetylalanine modification. Positions 4–135 (GLVASNLNLK…DFKIKCVAFE (132 aa)) constitute a Galectin domain. Lys13, Lys19, and Lys29 each carry N6-acetyllysine. The residue at position 30 (Ser30) is a Phosphoserine. Residues 45 to 49 (HFNPR), His53, Asn62, and 69 to 72 (WGTE) each bind a beta-D-galactoside. The residue at position 108 (Lys108) is an N6-acetyllysine; alternate. An N6-succinyllysine; alternate modification is found at Lys108. N6-acetyllysine is present on Lys128.

In terms of assembly, homodimer. Binds LGALS3BP. Interacts with CD2, CD3, CD4, CD6, CD7, CD43, ALCAM and CD45. Interacts with laminin (via poly-N-acetyllactosamine). Interacts with SUSD2. Interacts with cargo receptor TMED10; the interaction mediates the translocation from the cytoplasm into the ERGIC (endoplasmic reticulum-Golgi intermediate compartment) and thereby secretion. Interacts with CD69.

The protein localises to the secreted. It is found in the extracellular space. The protein resides in the extracellular matrix. Its subcellular location is the cytoplasm. In terms of biological role, lectin that binds beta-galactoside and a wide array of complex carbohydrates. Plays a role in regulating apoptosis, cell proliferation and cell differentiation. Inhibits CD45 protein phosphatase activity and therefore the dephosphorylation of Lyn kinase. Strong inducer of T-cell apoptosis. Plays a negative role in Th17 cell differentiation via activation of the receptor CD69. The polypeptide is Galectin-1 (Lgals1) (Mus musculus (Mouse)).